A 445-amino-acid polypeptide reads, in one-letter code: tRNA modification GTPase MnmE (445 aa).

(6S)-5-formyl-5,6,7,8-tetrahydrofolate contacts are provided by arginine 24, glutamate 81, and lysine 121. One can recognise a TrmE-type G domain in the interval 218–369; that stretch reads GLTVVIAGPP…LLEALVGFAR (152 aa). Residues 228 to 233, 247 to 253, 272 to 275, and 350 to 352 each bind GTP; these read NAGKST, SPHAGTT, DTAG, and SAR. Mg(2+) is bound by residues serine 232 and threonine 253. Lysine 445 provides a ligand contact to (6S)-5-formyl-5,6,7,8-tetrahydrofolate.

This sequence belongs to the TRAFAC class TrmE-Era-EngA-EngB-Septin-like GTPase superfamily. TrmE GTPase family. Homodimer. Heterotetramer of two MnmE and two MnmG subunits. Requires K(+) as cofactor.

It is found in the cytoplasm. Exhibits a very high intrinsic GTPase hydrolysis rate. Involved in the addition of a carboxymethylaminomethyl (cmnm) group at the wobble position (U34) of certain tRNAs, forming tRNA-cmnm(5)s(2)U34. This is tRNA modification GTPase MnmE from Bradyrhizobium sp. (strain BTAi1 / ATCC BAA-1182).